Consider the following 150-residue polypeptide: MEIEIQTKPFGKMQISEKQILSFPEGLLGFEDYKKFALIEEEEESVFKWLQSVEEVDLAFVVIPPSLFKKEYKPLISEQELQGIGITDLEDGLMLVIVTVPGEDPALMTANMQGPILINKKTLLGKQFISRNESHSVREKILASAAVEMD.

It belongs to the FliW family. In terms of assembly, interacts with translational regulator CsrA and flagellin(s).

The protein localises to the cytoplasm. Acts as an anti-CsrA protein, binds CsrA and prevents it from repressing translation of its target genes, one of which is flagellin. Binds to flagellin and participates in the assembly of the flagellum. The polypeptide is Flagellar assembly factor FliW (Leptospira borgpetersenii serovar Hardjo-bovis (strain JB197)).